A 443-amino-acid polypeptide reads, in one-letter code: Threonine/serine transporter TdcC (443 aa).

11 consecutive transmembrane segments (helical) span residues 22–42 (TTWT…FFPI), 44–64 (AGFG…PIAF), 97–117 (GVVI…IYGV), 140–160 (FVAL…KDLM), 163–183 (VMSY…LSLI), 207–227 (ILIT…FSPI), 261–281 (MLMV…LSPA), 311–331 (FAIT…FKSF), 366–386 (LSMI…PNIL), 389–409 (IEAM…MYAI), and 423–443 (DNVF…YKLF).

This sequence belongs to the amino acid/polyamine transporter 2 family. SdaC/TdcC subfamily.

It is found in the cell inner membrane. It catalyses the reaction L-threonine(in) + H(+)(in) = L-threonine(out) + H(+)(out). The catalysed reaction is L-serine(in) + H(+)(in) = L-serine(out) + H(+)(out). Functionally, involved in the import of threonine and serine into the cell, with the concomitant import of a proton (symport system). This chain is Threonine/serine transporter TdcC, found in Shigella flexneri serotype 5b (strain 8401).